We begin with the raw amino-acid sequence, 297 residues long: Cell division protein FtsX (297 aa).

Topologically, residues 1–21 (MRFGFLLNEVLTGFRRNVTMT) are cytoplasmic. The chain crosses the membrane as a helical span at residues 22–42 (IAMILTTAISVGLFGGGMLVV). The Extracellular portion of the chain corresponds to 43–171 (RLADSSRAIY…LFAVLDGLSN (129 aa)). Residues 172–192 (AAFAVALVQAIGAILLIANMV) form a helical membrane-spanning segment. The Cytoplasmic segment spans residues 193 to 219 (QVAAYTRRTEIGIMRLVGASRWYTQLP). A helical membrane pass occupies residues 220 to 240 (FLVEAMLAATMGVGIAVAGLM). The Extracellular portion of the chain corresponds to 241-267 (VVRALFLENALNQFYQANLIAKVDYAD). The chain crosses the membrane as a helical span at residues 268–288 (ILFITPWLLLLGVAMSGLTAY). At 289–297 (LTLRLYVRR) the chain is on the cytoplasmic side.

It belongs to the ABC-4 integral membrane protein family. FtsX subfamily. In terms of assembly, forms a membrane-associated complex with FtsE.

It localises to the cell membrane. Its function is as follows. Part of the ABC transporter FtsEX involved in cellular division. This chain is Cell division protein FtsX, found in Mycobacterium tuberculosis (strain ATCC 25177 / H37Ra).